Consider the following 478-residue polypeptide: Protein WVD2-like 7 (478 aa).

Disordered stretches follow at residues 201–326 and 385–420; these read DSAL…TGST and PMPS…SASI. Residues 208–217 show a composition bias toward basic and acidic residues; the sequence is AGSKLDEHAS. Composition is skewed to polar residues over residues 219-232 and 264-277; these read KPSN…SSVN and GSSL…NVDA. The span at 278–289 shows a compositional bias: basic and acidic residues; that stretch reads KSQKELRPKKTI. 2 stretches are compositionally biased toward polar residues: residues 309–326 and 407–420; these read RCKT…TGST and VAQS…SASI.

It belongs to the TPX2 family. In terms of tissue distribution, expressed in seedlings.

It localises to the cytoplasm. The protein resides in the cytoskeleton. Microtubule-associated protein (MAP) that regulates the orientation of interphase cortical microtubules. In Arabidopsis thaliana (Mouse-ear cress), this protein is Protein WVD2-like 7.